A 154-amino-acid polypeptide reads, in one-letter code: Isotocin-neurophysin IT 1 (154 aa).

Positions 1–20 (MSGSMFSVFSLLYLLSVCSA) are cleaved as a signal peptide. Cys-21 and Cys-26 are joined by a disulfide. Gly-29 carries the glycine amide modification. 7 disulfides stabilise this stretch: Cys-42-Cys-86, Cys-45-Cys-59, Cys-53-Cys-76, Cys-60-Cys-66, Cys-93-Cys-105, Cys-99-Cys-117, and Cys-106-Cys-111.

Belongs to the vasopressin/oxytocin family.

In terms of biological role, isotocin causes contraction of smooth muscles. This is Isotocin-neurophysin IT 1 from Catostomus commersonii (White sucker).